The chain runs to 170 residues: Extracellular globin-3 (170 aa).

The signal sequence occupies residues 1–17 (MLRQLLVLVGLAVVCLA). One can recognise a Globin domain in the interval 23-169 (CCSEEDHRIV…ILTKISSRLN (147 aa)). Cysteine 24 and cysteine 156 are disulfide-bonded. Histidine 119 is a binding site for heme b.

The protein belongs to the globin family. In terms of assembly, the extracellular hemoglobin of the earthworm consists of 12 subunits that have a hexagonal bilayer structure with a molecular weight near 3.8 million. Each one-twelfth subunit is composed primarily of disulfide linked trimers (chains A, B, and C) and monomers (chain D).

The protein resides in the secreted. In Lumbricus terrestris (Common earthworm), this protein is Extracellular globin-3.